Consider the following 426-residue polypeptide: Glutamate-1-semialdehyde 2,1-aminomutase (426 aa).

At K265 the chain carries N6-(pyridoxal phosphate)lysine.

This sequence belongs to the class-III pyridoxal-phosphate-dependent aminotransferase family. HemL subfamily. As to quaternary structure, homodimer. Requires pyridoxal 5'-phosphate as cofactor.

It localises to the cytoplasm. It catalyses the reaction (S)-4-amino-5-oxopentanoate = 5-aminolevulinate. Its pathway is porphyrin-containing compound metabolism; protoporphyrin-IX biosynthesis; 5-aminolevulinate from L-glutamyl-tRNA(Glu): step 2/2. In Alteromonas mediterranea (strain DSM 17117 / CIP 110805 / LMG 28347 / Deep ecotype), this protein is Glutamate-1-semialdehyde 2,1-aminomutase.